The sequence spans 2230 residues: MFKKLKQKISEEQQQLQQALAPAQASSNSSTPTRMRSRTSSFTEQLDEGTPNRESGDTQSFAQKLQLRVPSVESLFRSPIKESLFRSSSKESLVRTSSRESLNRLDLDSSTASFDPPSDMDSEAEDLVGNSDSLNKEQLIQRLRRMERSLSSYRGKYSELVTAYQMLQREKKKLQGILSQSQDKSLRRIAELREELQMDQQAKKHLQEEFDASLEEKDQYISVLQTQVSLLKQRLRNGPMNVDVLKPLPQLEPQAEVFTKEENPESDGEPVVEDGTSVKTLETLQQRVKRQENLLKRCKETIQSHKEQCTLLTSEKEALQEQLDERLQELEKIKDLHMAEKTKLITQLRDAKNLIEQLEQDKGMVIAETKRQMHETLEMKEEEIAQLRSRIKQMTTQGEELREQKEKSERAAFEELEKALSTAQKTEEARRKLKAEMDEQIKTIEKTSEEERISLQQELSRVKQEVVDVMKKSSEEQIAKLQKLHEKELARKEQELTKKLQTREREFQEQMKVALEKSQSEYLKISQEKEQQESLALEELELQKKAILTESENKLRDLQQEAETYRTRILELESSLEKSLQENKNQSKDLAVHLEAEKNKHNKEITVMVEKHKTELESLKHQQDALWTEKLQVLKQQYQTEMEKLREKCEQEKETLLKDKEIIFQAHIEEMNEKTLEKLDVKQTELESLSSELSEVLKARHKLEEELSVLKDQTDKMKQELEAKMDEQKNHHQQQVDSIIKEHEVSIQRTEKALKDQINQLELLLKERDKHLKEHQAHVENLEADIKRSEGELQQASAKLDVFQSYQSATHEQTKAYEEQLAQLQQKLLDLETERILLTKQVAEVEAQKKDVCTELDAHKIQVQDLMQQLEKQNSEMEQKVKSLTQVYESKLEDGNKEQEQTKQILVEKENMILQMREGQKKEIEILTQKLSAKEDSIHILNEEYETKFKNQEKKMEKVKQKAKEMQETLKKKLLDQEAKLKKELENTALELSQKEKQFNAKMLEMAQANSAGISDAVSRLETNQKEQIESLTEVHRRELNDVISIWEKKLNQQAEELQEIHEIQLQEKEQEVAELKQKILLFGCEKEEMNKEITWLKEEGVKQDTTLNELQEQLKQKSAHVNSLAQDETKLKAHLEKLEVDLNKSLKENTFLQEQLVELKMLAEEDKRKVSELTSKLKTTDEEFQSLKSSHEKSNKSLEDKSLEFKKLSEELAIQLDICCKKTEALLEAKTNELINISSSKTNAILSRISHCQHRTTKVKEALLIKTCTVSELEAQLRQLTEEQNTLNISFQQATHQLEEKENQIKSMKADIESLVTEKEALQKEGGNQQQAASEKESCITQLKKELSENINAVTLMKEELKEKKVEISSLSKQLTDLNVQLQNSISLSEKEAAISSLRKQYDEEKCELLDQVQDLSFKVDTLSKEKISALEQVDDWSNKFSEWKKKAQSRFTQHQNTVKELQIQLELKSKEAYEKDEQINLLKEELDQQNKRFDCLKGEMEDDKSKMEKKESNLETELKSQTARIMELEDHITQKTIEIESLNEVLKNYNQQKDIEHKELVQKLQHFQELGEEKDNRVKEAEEKILTLENQVYSMKAELETKKKELEHVNLSVKSKEEELKALEDRLESESAAKLAELKRKAEQKIAAIKKQLLSQMEEKEEQYKKGTESHLSELNTKLQEREREVHILEEKLKSVESSQSETLIVPRSAKNVAAYTEQEEADSQGCVQKTYEEKISVLQRNLTEKEKLLQRVGQEKEETVSSHFEMRCQYQERLIKLEHAEAKQHEDQSMIGHLQEELEEKNKKYSLIVAQHVEKEGGKNNIQAKQNLENVFDDVQKTLQEKELTCQILEQKIKELDSCLVRQKEVHRVEMEELTSKYEKLQALQQMDGRNKPTELLEENTEEKSKSHLVQPKLLSNMEAQHNDLEFKLAGAEREKQKLGKEIVRLQKDLRMLRKEHQQELEILKKEYDQEREEKIKQEQEDLELKHNSTLKQLMREFNTQLAQKEQELEMTIKETINKAQEVEAELLESHQEETNQLLKKIAEKDDDLKRTAKRYEEILDAREEEMTAKVRDLQTQLEELQKKYQQKLEQEENPGNDNVTIMELQTQLAQKTTLISDSKLKEQEFREQIHNLEDRLKKYEKNVYATTVGTPYKGGNLYHTDVSLFGEPTEFEYLRKVLFEYMMGRETKTMAKVITTVLKFPDDQTQKILEREDARLMFTSPRSGIF.

Residues 1–64 (MFKKLKQKIS…SGDTQSFAQK (64 aa)) are disordered. Residue Ser10 is modified to Phosphoserine. The segment covering 12–41 (EQQQLQQALAPAQASSNSSTPTRMRSRTSS) has biased composition (low complexity). Thr39 bears the Phosphothreonine mark. Ser41, Ser71, Ser78, and Ser89 each carry phosphoserine. Residues 87 to 107 (SSSKESLVRTSSRESLNRLDL) show a composition bias toward basic and acidic residues. The interval 87–127 (SSSKESLVRTSSRESLNRLDLDSSTASFDPPSDMDSEAEDL) is disordered. An interaction with MACF1 region spans residues 133–203 (SLNKEQLIQR…EELQMDQQAK (71 aa)). A coiled-coil region spans residues 133–2185 (SLNKEQLIQR…EYLRKVLFEY (2053 aa)). Ser266 is subject to Phosphoserine. Asn585 and Asn1612 each carry an N-linked (GlcNAc...) asparagine glycan. Residues 2168–2215 (LFGEPTEFEYLRKVLFEYMMGRETKTMAKVITTVLKFPDDQTQKILER) enclose the GRIP domain. A Phosphothreonine modification is found at Thr2223.

As to quaternary structure, homodimer. Interacts with RAB6A. Interacts with GTP-bound ARL1 and ARL3. Interacts with MACF1. Directly interacts with TBC1D23. Interacts with FAM91A1; this interaction may be mediated by TBC1D23.

It is found in the cytoplasm. The protein resides in the golgi apparatus membrane. Its subcellular location is the golgi apparatus. It localises to the trans-Golgi network membrane. In terms of biological role, involved in vesicular trafficking at the Golgi apparatus level. May play a role in delivery of transport vesicles containing GPI-linked proteins from the trans-Golgi network through its interaction with MACF1. Involved in endosome-to-Golgi trafficking. This Homo sapiens (Human) protein is Golgin subfamily A member 4 (GOLGA4).